The sequence spans 397 residues: uncharacterized protein (397 aa).

Disordered regions lie at residues 159 to 203 and 221 to 397; these read LNSS…KSTI and NSVK…KTKN. Positions 221–240 are enriched in low complexity; sequence NSVKSSPSKSFVSISSPVQS. Composition is skewed to polar residues over residues 285-309 and 320-330; these read TSTL…SSST and VNPNSTSSVTF. Positions 342–371 form a DNA-binding region, zn(2)-C6 fungal-type; sequence CSRCKKSKKGCDRQRPCGRCRDAGLNSEDC. Residues 350-363 show a composition bias toward basic and acidic residues; it reads KGCDRQRPCGRCRD. Positions 383–397 are enriched in basic residues; sequence RKPRGRGRGRPKTKN.

The protein resides in the nucleus. This is an uncharacterized protein from Schizosaccharomyces pombe (strain 972 / ATCC 24843) (Fission yeast).